The following is a 267-amino-acid chain: Thymidylate synthase (267 aa).

Arginine 24 is a binding site for dUMP. A (6R)-5,10-methylene-5,6,7,8-tetrahydrofolate-binding site is contributed by histidine 54. Residue 129-130 coordinates dUMP; that stretch reads RR. The Nucleophile role is filled by cysteine 149. DUMP is bound by residues 169-172, asparagine 180, and 210-212; these read RSAD and HIY. A (6R)-5,10-methylene-5,6,7,8-tetrahydrofolate-binding site is contributed by aspartate 172. Residue alanine 266 participates in (6R)-5,10-methylene-5,6,7,8-tetrahydrofolate binding.

It belongs to the thymidylate synthase family. Bacterial-type ThyA subfamily. In terms of assembly, homodimer.

The protein resides in the cytoplasm. It carries out the reaction dUMP + (6R)-5,10-methylene-5,6,7,8-tetrahydrofolate = 7,8-dihydrofolate + dTMP. Its pathway is pyrimidine metabolism; dTTP biosynthesis. In terms of biological role, catalyzes the reductive methylation of 2'-deoxyuridine-5'-monophosphate (dUMP) to 2'-deoxythymidine-5'-monophosphate (dTMP) while utilizing 5,10-methylenetetrahydrofolate (mTHF) as the methyl donor and reductant in the reaction, yielding dihydrofolate (DHF) as a by-product. This enzymatic reaction provides an intracellular de novo source of dTMP, an essential precursor for DNA biosynthesis. In Arthrobacter sp. (strain FB24), this protein is Thymidylate synthase.